The chain runs to 160 residues: Anaerobic nitrite reductase Glb1-1 (160 aa).

Residues 8-157 (GFTEEQEALV…LVNAIKSEMK (150 aa)) form the Globin domain. The Homodimerization signature appears at 41 to 45 (EIAPS). 5 residues coordinate heme b: Ser-51, Lys-65, His-69, Lys-99, and His-104. The short motif at 111-123 (DEHFEVTKFALLE) is the Homodimerization element.

This sequence belongs to the plant globin family. Homodimer. It depends on heme b as a cofactor.

The catalysed reaction is Fe(III)-heme b-[protein] + nitric oxide + H2O = Fe(II)-heme b-[protein] + nitrite + 2 H(+). Functionally, phytoglobin that reduces nitrite to nitric oxide (NO) under anoxic conditions (e.g. during flooding or in waterlogged soil) and upon root nodulation. Required for general plant development and during nodulation, especially for the onset of symbiosis. Monitors nitric oxide (NO) levels during early phase of the nitrogen-fixing symbiosis and buffers oxygen in functioning nodules. May not function as an oxygen storage or transport protein. Has an unusually high affinity for O(2) through a hexacoordinate heme iron because of a very low dissociation constant. This chain is Anaerobic nitrite reductase Glb1-1, found in Medicago truncatula (Barrel medic).